The chain runs to 496 residues: Glycerol kinase 2 (496 aa).

ADP is bound at residue Thr-11. Thr-11, Thr-12, and Ser-13 together coordinate ATP. Thr-11 provides a ligand contact to sn-glycerol 3-phosphate. Arg-15 contributes to the ADP binding site. Residues Arg-81, Glu-82, Tyr-133, and Asp-242 each contribute to the sn-glycerol 3-phosphate site. Residues Arg-81, Glu-82, Tyr-133, Asp-242, and Gln-243 each contribute to the glycerol site. Thr-264 and Gly-307 together coordinate ADP. ATP contacts are provided by Thr-264, Gly-307, Gln-311, and Gly-408. The ADP site is built by Gly-408 and Asn-412.

It belongs to the FGGY kinase family.

The enzyme catalyses glycerol + ATP = sn-glycerol 3-phosphate + ADP + H(+). It participates in polyol metabolism; glycerol degradation via glycerol kinase pathway; sn-glycerol 3-phosphate from glycerol: step 1/1. With respect to regulation, inhibited by fructose 1,6-bisphosphate (FBP). Key enzyme in the regulation of glycerol uptake and metabolism. Catalyzes the phosphorylation of glycerol to yield sn-glycerol 3-phosphate. The protein is Glycerol kinase 2 of Thermotoga maritima (strain ATCC 43589 / DSM 3109 / JCM 10099 / NBRC 100826 / MSB8).